The following is a 741-amino-acid chain: Cellulose 1,4-beta-cellobiosidase (reducing end) CelS (741 aa).

The signal sequence occupies residues 1–27 (MVKSRKISILLAVAMLVSIMIPTTAFA). Substrate is bound at residue Glu76. The active-site Proton donor is the Glu87. Residues Thr140, Asn204, Asp241, Gln247, and 251–252 (TN) contribute to the substrate site. The active-site Nucleophile is Asp255. Residues 301 to 302 (KY), 326 to 327 (WY), Tyr421, Asp520, and 645 to 646 (WH) each bind substrate. Positions 673-739 (STKLYGDVND…ILKEIDTLPY (67 aa)) constitute a Dockerin domain. Ca(2+) contacts are provided by Asp679, Asn681, Asp683, Gly684, Lys685, Asp690, Asp711, Leu712, Asn713, Asp715, Arg717, and Asp722.

It belongs to the glycosyl hydrolase 48 (cellulase L) family.

It localises to the secreted. It catalyses the reaction Hydrolysis of (1-&gt;4)-beta-D-glucosidic linkages in cellulose and similar substrates, releasing cellobiose from the reducing ends of the chains.. With respect to regulation, inhibited by cellobiose and lactose, but not by glucose. Its function is as follows. This enzyme catalyzes the exohydrolysis of 1,4-beta-glucosidic linkages in cellulose with a preference for amorphous or crystalline cellulose over carboxymethyl cellulose. This is Cellulose 1,4-beta-cellobiosidase (reducing end) CelS (celS) from Acetivibrio thermocellus (strain ATCC 27405 / DSM 1237 / JCM 9322 / NBRC 103400 / NCIMB 10682 / NRRL B-4536 / VPI 7372) (Clostridium thermocellum).